The following is a 368-amino-acid chain: Transaldolase (368 aa).

The active-site Schiff-base intermediate with substrate is the Lys-140.

It belongs to the transaldolase family. Type 2 subfamily.

The protein localises to the cytoplasm. The enzyme catalyses D-sedoheptulose 7-phosphate + D-glyceraldehyde 3-phosphate = D-erythrose 4-phosphate + beta-D-fructose 6-phosphate. It functions in the pathway carbohydrate degradation; pentose phosphate pathway; D-glyceraldehyde 3-phosphate and beta-D-fructose 6-phosphate from D-ribose 5-phosphate and D-xylulose 5-phosphate (non-oxidative stage): step 2/3. In terms of biological role, transaldolase is important for the balance of metabolites in the pentose-phosphate pathway. This Thermobifida fusca (strain YX) protein is Transaldolase.